The chain runs to 329 residues: Beta-ketoacyl-[acyl-carrier-protein] synthase III (329 aa).

Catalysis depends on residues Cys-123 and His-256. Residues 257-261 are ACP-binding; it reads QANIR. Residue Asn-286 is part of the active site.

The protein belongs to the thiolase-like superfamily. FabH family. Homodimer.

The protein resides in the cytoplasm. The enzyme catalyses malonyl-[ACP] + acetyl-CoA + H(+) = 3-oxobutanoyl-[ACP] + CO2 + CoA. It participates in lipid metabolism; fatty acid biosynthesis. Functionally, catalyzes the condensation reaction of fatty acid synthesis by the addition to an acyl acceptor of two carbons from malonyl-ACP. Catalyzes the first condensation reaction which initiates fatty acid synthesis and may therefore play a role in governing the total rate of fatty acid production. Possesses both acetoacetyl-ACP synthase and acetyl transacylase activities. Its substrate specificity determines the biosynthesis of branched-chain and/or straight-chain of fatty acids. This chain is Beta-ketoacyl-[acyl-carrier-protein] synthase III, found in Paraburkholderia phymatum (strain DSM 17167 / CIP 108236 / LMG 21445 / STM815) (Burkholderia phymatum).